Here is a 643-residue protein sequence, read N- to C-terminus: Phosphomethylpyrimidine synthase (643 aa).

Residues N248, M277, Y306, H342, S362–G364, D403–R406, and E442 contribute to the substrate site. H446 contributes to the Zn(2+) binding site. Y469 serves as a coordination point for substrate. Position 510 (H510) interacts with Zn(2+). Residues C590, C593, and C598 each contribute to the [4Fe-4S] cluster site.

It belongs to the ThiC family. Homodimer. The cofactor is [4Fe-4S] cluster.

It carries out the reaction 5-amino-1-(5-phospho-beta-D-ribosyl)imidazole + S-adenosyl-L-methionine = 4-amino-2-methyl-5-(phosphooxymethyl)pyrimidine + CO + 5'-deoxyadenosine + formate + L-methionine + 3 H(+). It functions in the pathway cofactor biosynthesis; thiamine diphosphate biosynthesis. In terms of biological role, catalyzes the synthesis of the hydroxymethylpyrimidine phosphate (HMP-P) moiety of thiamine from aminoimidazole ribotide (AIR) in a radical S-adenosyl-L-methionine (SAM)-dependent reaction. The polypeptide is Phosphomethylpyrimidine synthase (Burkholderia multivorans (strain ATCC 17616 / 249)).